We begin with the raw amino-acid sequence, 489 residues long: GDP-fucose protein O-fucosyltransferase 4 (489 aa).

At 1 to 7 (MAARCTE) the chain is on the cytoplasmic side. The chain crosses the membrane as a helical; Signal-anchor for type II membrane protein span at residues 8–24 (AVLAALGVLSVCSASSS). The Lumenal segment spans residues 25 to 489 (GSEASGEAER…EIFMKRNKNL (465 aa)). The N-linked (GlcNAc...) asparagine glycan is linked to asparagine 162. Cysteine 385 and cysteine 388 are disulfide-bonded.

This sequence belongs to the glycosyltransferase 10 family. In terms of tissue distribution, widely expressed. Expressed at slightly higher level in heart, kidney and lung.

The protein resides in the endoplasmic reticulum membrane. The enzyme catalyses L-threonyl-[protein] + GDP-beta-L-fucose = 3-O-(alpha-L-fucosyl)-L-threonyl-[protein] + GDP + H(+). It catalyses the reaction L-seryl-[protein] + GDP-beta-L-fucose = 3-O-(alpha-L-fucosyl)-L-seryl-[protein] + GDP + H(+). Its pathway is protein modification; protein glycosylation. Protein O-fucosyltransferase that specifically catalyzes O-fucosylation of serine or threonine residues in EMI domains of target proteins, such as MMRN1, MMRN2 and EMID1. Attaches fucose through an O-glycosidic linkage. O-fucosylation of EMI domain-containing proteins may be required for facilitating protein folding and secretion. Also shows minor alpha-(1,3)-fucosyltransferase activity toward activity toward biantennary N-glycan acceptors. However, this was tested with a library of synthetic substrates and this activity is unsure in vivo. The protein is GDP-fucose protein O-fucosyltransferase 4 (Fut11) of Mus musculus (Mouse).